Consider the following 150-residue polypeptide: Cyclin-dependent kinases regulatory subunit (150 aa).

The span at 115–137 (AAAQQQQQQQQQQQQQQQQHQTQ) shows a compositional bias: low complexity. Positions 115–150 (AAAQQQQQQQQQQQQQQQQHQTQSISNDMQVPPQIS) are disordered.

It belongs to the CKS family. Forms a stable but non-covalent complex with the CDC28 protein and with a cyclin.

In terms of biological role, binds to the catalytic subunit of the cyclin dependent kinase (CDC28) and is essential for its biological function. In Saccharomyces cerevisiae (strain ATCC 204508 / S288c) (Baker's yeast), this protein is Cyclin-dependent kinases regulatory subunit.